Consider the following 121-residue polypeptide: Large ribosomal subunit protein uL24 (121 aa).

This sequence belongs to the universal ribosomal protein uL24 family. In terms of assembly, part of the 50S ribosomal subunit.

Its function is as follows. One of two assembly initiator proteins, it binds directly to the 5'-end of the 23S rRNA, where it nucleates assembly of the 50S subunit. In terms of biological role, located at the polypeptide exit tunnel on the outside of the subunit. This chain is Large ribosomal subunit protein uL24, found in Methanocorpusculum labreanum (strain ATCC 43576 / DSM 4855 / Z).